A 199-amino-acid polypeptide reads, in one-letter code: NADH-quinone oxidoreductase subunit C (199 aa).

This sequence belongs to the complex I 30 kDa subunit family. NDH-1 is composed of 14 different subunits. Subunits NuoB, C, D, E, F, and G constitute the peripheral sector of the complex.

It is found in the cell inner membrane. It catalyses the reaction a quinone + NADH + 5 H(+)(in) = a quinol + NAD(+) + 4 H(+)(out). Its function is as follows. NDH-1 shuttles electrons from NADH, via FMN and iron-sulfur (Fe-S) centers, to quinones in the respiratory chain. The immediate electron acceptor for the enzyme in this species is believed to be ubiquinone. Couples the redox reaction to proton translocation (for every two electrons transferred, four hydrogen ions are translocated across the cytoplasmic membrane), and thus conserves the redox energy in a proton gradient. In Roseobacter denitrificans (strain ATCC 33942 / OCh 114) (Erythrobacter sp. (strain OCh 114)), this protein is NADH-quinone oxidoreductase subunit C.